The chain runs to 195 residues: CASP-like protein 1B1 (195 aa).

The Cytoplasmic segment spans residues 1-25 (MDLEKGKKPSEQAAACRIMQVKDKL). A helical transmembrane segment spans residues 26–46 (ITLQPVVRACVFLATAVAAVI). Topologically, residues 47–78 (MGLNKQSYTTVVAIVGTRPVTQTFTAKFKDTP) are extracellular. The chain crosses the membrane as a helical span at residues 79–99 (AFVFFVIANAIASGYNLMVLV). Topologically, residues 100 to 114 (TRRILQRRAQSLSVH) are cytoplasmic. The chain crosses the membrane as a helical span at residues 115–135 (LLDMVILTLLATGSATAASMA). At 136 to 160 (QLGKNGNLHARWNPICDKFGSFCNH) the chain is on the extracellular side. Residues 161–181 (GGIALMSSFIGVALMLALNLL) form a helical membrane-spanning segment. Topologically, residues 182-195 (SAAANSPRSNVTGQ) are cytoplasmic.

It belongs to the Casparian strip membrane proteins (CASP) family. As to quaternary structure, homodimer and heterodimers.

Its subcellular location is the cell membrane. The chain is CASP-like protein 1B1 from Oryza sativa subsp. indica (Rice).